A 144-amino-acid chain; its full sequence is Sirohydrochlorin cobaltochelatase (144 aa).

Residue H9 is the Proton acceptor of the active site. H9 contributes to the Co(2+) binding site. H9 serves as a coordination point for Ni(2+). Residues E45 and L70 to H75 each bind substrate. H75 is a binding site for Co(2+). H75 contacts Ni(2+). The disordered stretch occupies residues G89 to A112. Residues H95–H108 show a composition bias toward basic residues.

It belongs to the CbiX family. CbiXS subfamily. In terms of assembly, homotetramer; dimer of dimers.

It carries out the reaction Co-sirohydrochlorin + 2 H(+) = sirohydrochlorin + Co(2+). The catalysed reaction is Ni-sirohydrochlorin + 2 H(+) = sirohydrochlorin + Ni(2+). It participates in cofactor biosynthesis; adenosylcobalamin biosynthesis; cob(II)yrinate a,c-diamide from sirohydrochlorin (anaerobic route): step 1/10. In terms of biological role, catalyzes the insertion of Co(2+) into sirohydrochlorin as part of the anaerobic pathway to cobalamin biosynthesis. Involved in the biosynthesis of the unique nickel-containing tetrapyrrole coenzyme F430, the prosthetic group of methyl-coenzyme M reductase (MCR), which plays a key role in methanogenesis and anaerobic methane oxidation. Catalyzes the insertion of Ni(2+) into sirohydrochlorin to yield Ni-sirohydrochlorin. This chain is Sirohydrochlorin cobaltochelatase, found in Methanococcus maripaludis (strain DSM 14266 / JCM 13030 / NBRC 101832 / S2 / LL).